A 418-amino-acid polypeptide reads, in one-letter code: Tyrosine--tRNA ligase (418 aa).

Residues 42 to 51 (PTSPDLHLGH) carry the 'HIGH' region motif. The 'KMSKS' region motif lies at 226 to 230 (KMSKS). Lys229 serves as a coordination point for ATP. The region spanning 339–400 (VRLVALLTKS…GKRNFIKVRL (62 aa)) is the S4 RNA-binding domain.

Belongs to the class-I aminoacyl-tRNA synthetase family. TyrS type 2 subfamily. As to quaternary structure, homodimer.

Its subcellular location is the cytoplasm. It catalyses the reaction tRNA(Tyr) + L-tyrosine + ATP = L-tyrosyl-tRNA(Tyr) + AMP + diphosphate + H(+). In terms of biological role, catalyzes the attachment of tyrosine to tRNA(Tyr) in a two-step reaction: tyrosine is first activated by ATP to form Tyr-AMP and then transferred to the acceptor end of tRNA(Tyr). This chain is Tyrosine--tRNA ligase, found in Xylella fastidiosa (strain Temecula1 / ATCC 700964).